The following is a 341-amino-acid chain: Adenylosuccinate synthetase (341 aa).

Residues 12–18 (GDEGKGK) and 42–44 (GHS) contribute to the GTP site. Asp-13 functions as the Proton acceptor in the catalytic mechanism. Residues Asp-13 and Gly-42 each coordinate Mg(2+). Residues 13–16 (DEGK), 40–43 (NAGH), Thr-127, Arg-141, Gln-179, Thr-194, and Arg-256 each bind IMP. The Proton donor role is filled by His-43. Residue 252–258 (VVTGRKR) participates in substrate binding. GTP is bound by residues Arg-258, 284-286 (CID), and 324-326 (STG).

Belongs to the adenylosuccinate synthetase family. Homodimer. Mg(2+) is required as a cofactor.

The protein resides in the cytoplasm. It carries out the reaction IMP + L-aspartate + GTP = N(6)-(1,2-dicarboxyethyl)-AMP + GDP + phosphate + 2 H(+). The protein operates within purine metabolism; AMP biosynthesis via de novo pathway; AMP from IMP: step 1/2. In terms of biological role, plays an important role in the de novo pathway of purine nucleotide biosynthesis. Catalyzes the first committed step in the biosynthesis of AMP from IMP. In Methanosphaera stadtmanae (strain ATCC 43021 / DSM 3091 / JCM 11832 / MCB-3), this protein is Adenylosuccinate synthetase.